The following is a 258-amino-acid chain: Ubiquinone/menaquinone biosynthesis C-methyltransferase UbiE (258 aa).

Positions 1–20 (MSESRTSADGGMETSYGFRE) are disordered. S-adenosyl-L-methionine contacts are provided by residues Thr-81, Asp-102, and 130 to 131 (NA).

This sequence belongs to the class I-like SAM-binding methyltransferase superfamily. MenG/UbiE family.

The catalysed reaction is a 2-demethylmenaquinol + S-adenosyl-L-methionine = a menaquinol + S-adenosyl-L-homocysteine + H(+). The enzyme catalyses a 2-methoxy-6-(all-trans-polyprenyl)benzene-1,4-diol + S-adenosyl-L-methionine = a 5-methoxy-2-methyl-3-(all-trans-polyprenyl)benzene-1,4-diol + S-adenosyl-L-homocysteine + H(+). It functions in the pathway quinol/quinone metabolism; menaquinone biosynthesis; menaquinol from 1,4-dihydroxy-2-naphthoate: step 2/2. The protein operates within cofactor biosynthesis; ubiquinone biosynthesis. Its function is as follows. Methyltransferase required for the conversion of demethylmenaquinol (DMKH2) to menaquinol (MKH2) and the conversion of 2-polyprenyl-6-methoxy-1,4-benzoquinol (DDMQH2) to 2-polyprenyl-3-methyl-6-methoxy-1,4-benzoquinol (DMQH2). This is Ubiquinone/menaquinone biosynthesis C-methyltransferase UbiE from Rhizobium etli (strain CIAT 652).